The chain runs to 675 residues: Potassium-transporting ATPase ATP-binding subunit 2 (675 aa).

Helical transmembrane passes span 34 to 54, 65 to 85, 216 to 236, and 245 to 265; these read IMFV…FPDI, LITI…SEAF, IALF…IVTL, and LILP…TTIG. Residue Asp-304 is the 4-aspartylphosphate intermediate of the active site. Residues Asp-341, Glu-345, 372 to 379, and Lys-390 contribute to the ATP site; that span reads FTAETRMS. Asp-513 and Asp-517 together coordinate Mg(2+). 3 helical membrane-spanning segments follow: residues 569–591, 611–631, and 644–664; these read ALTT…ALMM, AIIS…PIAM, and IFIN…FLGI.

This sequence belongs to the cation transport ATPase (P-type) (TC 3.A.3) family. Type IA subfamily. As to quaternary structure, the system is composed of three essential subunits: KdpA, KdpB and KdpC.

The protein resides in the cell membrane. It catalyses the reaction K(+)(out) + ATP + H2O = K(+)(in) + ADP + phosphate + H(+). Part of the high-affinity ATP-driven potassium transport (or Kdp) system, which catalyzes the hydrolysis of ATP coupled with the electrogenic transport of potassium into the cytoplasm. This subunit is responsible for energy coupling to the transport system and for the release of the potassium ions to the cytoplasm. This is Potassium-transporting ATPase ATP-binding subunit 2 from Staphylococcus aureus (strain Mu50 / ATCC 700699).